We begin with the raw amino-acid sequence, 254 residues long: MEEQTFISKKVGVLPARWGSVRFPGKPLAMILGKSLIQRTYENIIQSETLDKVVVATDDQRIMDHVLDFGGACLMTSPECANGTERMAETVSRYFPEAEIMVNIQGDEPCLRHTVVDALVRKLEEHPEIQMVTPVAQTTDSHEILTNQKVKCVFDKNGKALYFSRSPIPHILKKETPIYLHIGVYAFRRSALFSYIASAPSPLSQAEDLEQLRVLEHGGSIHVCVVEAKSPSVDYPEDISKVEEYLTCHSSASF.

The protein belongs to the KdsB family.

It is found in the cytoplasm. The enzyme catalyses 3-deoxy-alpha-D-manno-oct-2-ulosonate + CTP = CMP-3-deoxy-beta-D-manno-octulosonate + diphosphate. Its pathway is nucleotide-sugar biosynthesis; CMP-3-deoxy-D-manno-octulosonate biosynthesis; CMP-3-deoxy-D-manno-octulosonate from 3-deoxy-D-manno-octulosonate and CTP: step 1/1. It participates in bacterial outer membrane biogenesis; lipopolysaccharide biosynthesis. Activates KDO (a required 8-carbon sugar) for incorporation into bacterial lipopolysaccharide in Gram-negative bacteria. This is 3-deoxy-manno-octulosonate cytidylyltransferase from Chlamydia abortus (strain DSM 27085 / S26/3) (Chlamydophila abortus).